We begin with the raw amino-acid sequence, 467 residues long: Glutamate--tRNA ligase (467 aa).

Positions 13-23 (PSPTGFLHLGG) match the 'HIGH' region motif. Residues 118 to 133 (ARGDKPRYDGTWRPEP) are compositionally biased toward basic and acidic residues. Residues 118-141 (ARGDKPRYDGTWRPEPGKTLPAIP) form a disordered region. A 'KMSKS' region motif is present at residues 245–249 (KLSKR). Lys248 contacts ATP.

This sequence belongs to the class-I aminoacyl-tRNA synthetase family. Glutamate--tRNA ligase type 1 subfamily. As to quaternary structure, monomer.

Its subcellular location is the cytoplasm. It carries out the reaction tRNA(Glu) + L-glutamate + ATP = L-glutamyl-tRNA(Glu) + AMP + diphosphate. In terms of biological role, catalyzes the attachment of glutamate to tRNA(Glu) in a two-step reaction: glutamate is first activated by ATP to form Glu-AMP and then transferred to the acceptor end of tRNA(Glu). The polypeptide is Glutamate--tRNA ligase (Bordetella avium (strain 197N)).